Consider the following 307-residue polypeptide: Glycine--tRNA ligase alpha subunit (307 aa).

It belongs to the class-II aminoacyl-tRNA synthetase family. As to quaternary structure, tetramer of two alpha and two beta subunits.

It localises to the cytoplasm. The catalysed reaction is tRNA(Gly) + glycine + ATP = glycyl-tRNA(Gly) + AMP + diphosphate. This is Glycine--tRNA ligase alpha subunit (glyQ) from Xylella fastidiosa (strain 9a5c).